Reading from the N-terminus, the 487-residue chain is MTELFIDGAWVAGSGPAFASRNPGTDDIAWQGASASAADVDRAIMSARRAFADWSALDFESRCAIAKRFAALLNERKEALAAAIGRETGKPLWEARTEVAAMAAKVGISIQAYQERTGEKRQDMADGVAVLRHRPHGVVAVFGPYNFPGHLPNGHIVPALIAGNTVVFKPSELAPGVAQATVEVWKDAGLPAGVLNLVQGEKDTGIALANHRQIDGLFFTGSSDTGTLLHKQFGGRPEIVLALEMGGNNPLVIGEVEDIDAAVHHTIQSAFLSAGQRCTCARRIFVPQGAFGDRFLARFVDVTSKITADVFDADPQPFMGAVISARAAAKLVDAQSRLIEQGAQPIIAMKQRDPRLGFVNAAIVDVTNVANLPDEEHFGPLAQIVRYADFDEAIARANDTAFGLSAGLLADDARAWEHFRRTIRAGIVNWNRPTNGASSAAPFGGTGRSGNHRPSAYYAADYCAYPMASVESAQLTLPASLSPGLHF.

221-226 (GSSDTG) serves as a coordination point for NAD(+). Active-site residues include Glu-244 and Cys-278.

Belongs to the aldehyde dehydrogenase family. AstD subfamily.

It catalyses the reaction N-succinyl-L-glutamate 5-semialdehyde + NAD(+) + H2O = N-succinyl-L-glutamate + NADH + 2 H(+). It functions in the pathway amino-acid degradation; L-arginine degradation via AST pathway; L-glutamate and succinate from L-arginine: step 4/5. Its function is as follows. Catalyzes the NAD-dependent reduction of succinylglutamate semialdehyde into succinylglutamate. This Burkholderia multivorans (strain ATCC 17616 / 249) protein is N-succinylglutamate 5-semialdehyde dehydrogenase.